The primary structure comprises 217 residues: 7-cyano-7-deazaguanine synthase (217 aa).

10 to 20 is an ATP binding site; sequence FSGGQDSTTCL. Residues Cys-185, Cys-194, Cys-197, and Cys-200 each contribute to the Zn(2+) site.

The protein belongs to the QueC family. Homodimer. Requires Zn(2+) as cofactor.

The catalysed reaction is 7-carboxy-7-deazaguanine + NH4(+) + ATP = 7-cyano-7-deazaguanine + ADP + phosphate + H2O + H(+). It participates in purine metabolism; 7-cyano-7-deazaguanine biosynthesis. In terms of biological role, catalyzes the ATP-dependent conversion of 7-carboxy-7-deazaguanine (CDG) to 7-cyano-7-deazaguanine (preQ(0)). The polypeptide is 7-cyano-7-deazaguanine synthase (Streptococcus mutans serotype c (strain ATCC 700610 / UA159)).